The primary structure comprises 500 residues: Lysine--tRNA ligase (500 aa).

Mg(2+) is bound by residues Glu-410 and Glu-417.

It belongs to the class-II aminoacyl-tRNA synthetase family. In terms of assembly, homodimer. The cofactor is Mg(2+).

It localises to the cytoplasm. The catalysed reaction is tRNA(Lys) + L-lysine + ATP = L-lysyl-tRNA(Lys) + AMP + diphosphate. The chain is Lysine--tRNA ligase from Shewanella piezotolerans (strain WP3 / JCM 13877).